Here is a 177-residue protein sequence, read N- to C-terminus: MLALLKQFSEKRFVWFLLAFSSLALESTALYFQYGMGLQPCVLCVYERLAMIGLFVAGTIALLQPRVFILRLIALALGLFSSIKGLLISFRHLDLQMNPAPWKQCEFIPNFPETLPFHQWFPFIFNPTGSCNESQWSLFGLTMVQWLVVIFSLYVVILTLLLIAQVIKTRKQRRLFN.

The Cytoplasmic segment spans residues 1–14 (MLALLKQFSEKRFV). The chain crosses the membrane as a helical span at residues 15–31 (WFLLAFSSLALESTALY). Residues 32 to 49 (FQYGMGLQPCVLCVYERL) lie on the Periplasmic side of the membrane. An intrachain disulfide couples cysteine 41 to cysteine 44. A helical transmembrane segment spans residues 50–65 (AMIGLFVAGTIALLQP). The Cytoplasmic segment spans residues 66 to 72 (RVFILRL). A helical membrane pass occupies residues 73–90 (IALALGLFSSIKGLLISF). The Periplasmic segment spans residues 91-145 (RHLDLQMNPAPWKQCEFIPNFPETLPFHQWFPFIFNPTGSCNESQWSLFGLTMVQ). A disulfide bridge links cysteine 105 with cysteine 131. A helical membrane pass occupies residues 146-164 (WLVVIFSLYVVILTLLLIA). Over 165–177 (QVIKTRKQRRLFN) the chain is Cytoplasmic.

Belongs to the DsbB family.

The protein localises to the cell inner membrane. In terms of biological role, required for disulfide bond formation in some periplasmic proteins. Acts by oxidizing the DsbA protein. The chain is Disulfide bond formation protein B from Haemophilus influenzae (strain ATCC 51907 / DSM 11121 / KW20 / Rd).